Consider the following 585-residue polypeptide: Proline--tRNA ligase (585 aa).

The protein belongs to the class-II aminoacyl-tRNA synthetase family. ProS type 1 subfamily. In terms of assembly, homodimer.

The protein localises to the cytoplasm. The enzyme catalyses tRNA(Pro) + L-proline + ATP = L-prolyl-tRNA(Pro) + AMP + diphosphate. Its function is as follows. Catalyzes the attachment of proline to tRNA(Pro) in a two-step reaction: proline is first activated by ATP to form Pro-AMP and then transferred to the acceptor end of tRNA(Pro). As ProRS can inadvertently accommodate and process non-cognate amino acids such as alanine and cysteine, to avoid such errors it has two additional distinct editing activities against alanine. One activity is designated as 'pretransfer' editing and involves the tRNA(Pro)-independent hydrolysis of activated Ala-AMP. The other activity is designated 'posttransfer' editing and involves deacylation of mischarged Ala-tRNA(Pro). The misacylated Cys-tRNA(Pro) is not edited by ProRS. The sequence is that of Proline--tRNA ligase from Acidobacterium capsulatum (strain ATCC 51196 / DSM 11244 / BCRC 80197 / JCM 7670 / NBRC 15755 / NCIMB 13165 / 161).